A 286-amino-acid chain; its full sequence is Translocon-associated protein subunit alpha (286 aa).

Residues 1–21 form the signal peptide; that stretch reads MRLLPRLLLLLLLVFPATVLL. Residues 22 to 207 lie on the Lumenal side of the membrane; the sequence is RGGPGGSLAE…EREDGLDGQT (186 aa). The interval 28-83 is disordered; it reads SLAEAQDLSEDEETVEDSVIEDEDDEAEVEEDEPTDLAEDREEEDVSGEPEASPSA. The segment covering 34-75 has biased composition (acidic residues); that stretch reads DLSEDEETVEDSVIEDEDDEAEVEEDEPTDLAEDREEEDVSG. Asn-136 and Asn-191 each carry an N-linked (GlcNAc...) asparagine glycan. Residues 208–228 form a helical membrane-spanning segment; it reads IFMYMSLAGLGLLVVVGLHQL. At 229–286 the chain is on the cytoplasmic side; sequence LESRNRKRPIQKVEMGTSSQNDVDMSWIPQETLNQINKASPRRLPRKRPQKRSVGSDE. Phosphoserine is present on Ser-247. Thr-260 is modified (phosphothreonine). The disordered stretch occupies residues 264-286; the sequence is INKASPRRLPRKRPQKRSVGSDE. A Phosphoserine modification is found at Ser-268. Residues 268-279 show a composition bias toward basic residues; that stretch reads SPRRLPRKRPQK.

It belongs to the TRAP-alpha family. Heterotetramer of TRAP-alpha, TRAP-beta, TRAP-delta and TRAP-gamma. Interacts with palmitoylated calnexin (CALX), the interaction is required for efficient folding of glycosylated proteins. Post-translationally, phosphorylated in its cytoplasmic tail.

It localises to the endoplasmic reticulum membrane. Functionally, TRAP proteins are part of a complex whose function is to bind calcium to the ER membrane and thereby regulate the retention of ER resident proteins. May be involved in the recycling of the translocation apparatus after completion of the translocation process or may function as a membrane-bound chaperone facilitating folding of translocated proteins. This Oryctolagus cuniculus (Rabbit) protein is Translocon-associated protein subunit alpha (SSR1).